Consider the following 429-residue polypeptide: Adenylosuccinate synthetase (429 aa).

Residues 12-18 and 40-42 contribute to the GTP site; these read GDEGKGK and GHT. Residue D13 is the Proton acceptor of the active site. Residues D13 and G40 each coordinate Mg(2+). IMP-binding positions include 13–16, 38–41, T129, R143, Q223, T238, and R302; these read DEGK and NAGH. Catalysis depends on H41, which acts as the Proton donor. 298–304 is a binding site for substrate; sequence VVTGRKR. Residues R304, 330–332, and 412–414 contribute to the GTP site; these read KLD and STS.

This sequence belongs to the adenylosuccinate synthetase family. In terms of assembly, homodimer. Mg(2+) is required as a cofactor.

It is found in the cytoplasm. The enzyme catalyses IMP + L-aspartate + GTP = N(6)-(1,2-dicarboxyethyl)-AMP + GDP + phosphate + 2 H(+). It participates in purine metabolism; AMP biosynthesis via de novo pathway; AMP from IMP: step 1/2. Functionally, plays an important role in the de novo pathway of purine nucleotide biosynthesis. Catalyzes the first committed step in the biosynthesis of AMP from IMP. The protein is Adenylosuccinate synthetase of Bartonella tribocorum (strain CIP 105476 / IBS 506).